We begin with the raw amino-acid sequence, 379 residues long: Flagellar P-ring protein (379 aa).

The first 32 residues, 1–32 (MTAPAGFLPRVGRLIAVALTAVFLLAPTGAEA), serve as a signal peptide directing secretion.

This sequence belongs to the FlgI family. In terms of assembly, the basal body constitutes a major portion of the flagellar organelle and consists of four rings (L,P,S, and M) mounted on a central rod.

The protein resides in the periplasm. It localises to the bacterial flagellum basal body. Functionally, assembles around the rod to form the L-ring and probably protects the motor/basal body from shearing forces during rotation. This is Flagellar P-ring protein from Rhodospirillum rubrum (strain ATCC 11170 / ATH 1.1.1 / DSM 467 / LMG 4362 / NCIMB 8255 / S1).